Reading from the N-terminus, the 748-residue chain is Catalase-peroxidase (748 aa).

Positions 92–238 form a cross-link, tryptophyl-tyrosyl-methioninium (Trp-Tyr) (with M-264); it reads WHSAGTYRIG…LAAVQMGLIY (147 aa). Histidine 93 serves as the catalytic Proton acceptor. The segment at residues 238 to 264 is a cross-link (tryptophyl-tyrosyl-methioninium (Tyr-Met) (with W-92)); it reads YVNPEGPDGNPDPIASARDIRDTFARM. Histidine 279 provides a ligand contact to heme b.

Belongs to the peroxidase family. Peroxidase/catalase subfamily. Homodimer or homotetramer. Heme b is required as a cofactor. Post-translationally, formation of the three residue Trp-Tyr-Met cross-link is important for the catalase, but not the peroxidase activity of the enzyme.

It carries out the reaction H2O2 + AH2 = A + 2 H2O. The enzyme catalyses 2 H2O2 = O2 + 2 H2O. In terms of biological role, bifunctional enzyme with both catalase and broad-spectrum peroxidase activity. This Xanthomonas axonopodis pv. citri (strain 306) protein is Catalase-peroxidase.